Consider the following 430-residue polypeptide: Enolase (430 aa).

Q163 contacts (2R)-2-phosphoglycerate. E205 (proton donor) is an active-site residue. Positions 242, 287, and 314 each coordinate Mg(2+). Residues K339, R368, S369, and K390 each contribute to the (2R)-2-phosphoglycerate site. K339 (proton acceptor) is an active-site residue.

It belongs to the enolase family. It depends on Mg(2+) as a cofactor.

It localises to the cytoplasm. Its subcellular location is the secreted. The protein localises to the cell surface. The enzyme catalyses (2R)-2-phosphoglycerate = phosphoenolpyruvate + H2O. It functions in the pathway carbohydrate degradation; glycolysis; pyruvate from D-glyceraldehyde 3-phosphate: step 4/5. Functionally, catalyzes the reversible conversion of 2-phosphoglycerate (2-PG) into phosphoenolpyruvate (PEP). It is essential for the degradation of carbohydrates via glycolysis. The polypeptide is Enolase (Bacillus velezensis (strain DSM 23117 / BGSC 10A6 / LMG 26770 / FZB42) (Bacillus amyloliquefaciens subsp. plantarum)).